The sequence spans 583 residues: Multidrug transporter QDR2 (583 aa).

Residues 23-46 (EKYDGPDLSEVDSEDNDKMIKTNE) form a disordered region. Asn60 is a glycosylation site (N-linked (GlcNAc...) asparagine). A helical transmembrane segment spans residues 88 to 108 (AYTGLFSTMAGAIYYPVLSVI). Asn120 is a glycosylation site (N-linked (GlcNAc...) asparagine). A run of 5 helical transmembrane segments spans residues 121–141 (ITVVVYFIFQGIAPTLMGGLA), 148–168 (PVVLFAVTVYFGACIGLACAQ), 178–198 (CLQAAGISPVIAINSGIIGDV), 208–228 (VGYISGFQVLGSAFGALIGAG), and 238–258 (IFWFLAIGSGVCLVFSIIMLP). N-linked (GlcNAc...) asparagine glycosylation is present at Asn267. A run of 2 helical transmembrane segments spans residues 323-342 (ILLVTAGIQFATWSTHQTAL) and 354-374 (VAKIGLCYLPTGICTLISIVT). Asn380 carries an N-linked (GlcNAc...) asparagine glycan. 4 helical membrane-spanning segments follow: residues 432 to 452 (HAAFVTLLLSSSGFVAFGWCI), 458 to 478 (LASVLVMSGFASLFSNCILTF), 493 to 513 (TATGCLNLFRCLLSALFIGCL), and 524 to 544 (GVFTFLGALTALSACPLFYLL).

The protein belongs to the major facilitator superfamily. CAR1 family.

The protein resides in the cell membrane. In terms of biological role, multidrug resistance transporter involved in resistance to the antifungal drugs miconazole, tioconazole, clotrimazole, and ketoconazole; as well as to quinidine. Decreases the intracellular accumulation of clotrimazole in and plays a role in the extrusion of this antifungal from preloaded cells. The chain is Multidrug transporter QDR2 from Candida glabrata (strain ATCC 2001 / BCRC 20586 / JCM 3761 / NBRC 0622 / NRRL Y-65 / CBS 138) (Yeast).